The sequence spans 828 residues: Periplasmic nitrate reductase (828 aa).

Residues 1–31 constitute a signal peptide (tat-type signal); that stretch reads MKLSRRSFMKANAVAAAAAAAGLSVPGVARA. Residues 39–95 enclose the 4Fe-4S Mo/W bis-MGD-type domain; sequence IKWDKAPCRFCGTGCGVLVGTQQGRVVACQGDPDAPVNRGLNCIKGYFLPKIMYGKD. [4Fe-4S] cluster contacts are provided by cysteine 46, cysteine 49, cysteine 53, and cysteine 81. Residues lysine 83, glutamine 150, asparagine 175, cysteine 179, 212 to 219, 243 to 247, 262 to 264, methionine 372, glutamine 376, asparagine 482, 508 to 509, lysine 531, aspartate 558, and 718 to 727 contribute to the Mo-bis(molybdopterin guanine dinucleotide) site; these read WGSNMAEM, STFQH, QSD, SD, and TGRVLEHWHT. Phenylalanine 794 contributes to the substrate binding site. Mo-bis(molybdopterin guanine dinucleotide) is bound by residues asparagine 802 and lysine 819.

This sequence belongs to the prokaryotic molybdopterin-containing oxidoreductase family. NasA/NapA/NarB subfamily. Component of the periplasmic nitrate reductase NapAB complex composed of NapA and NapB. It depends on [4Fe-4S] cluster as a cofactor. The cofactor is Mo-bis(molybdopterin guanine dinucleotide). Post-translationally, predicted to be exported by the Tat system. The position of the signal peptide cleavage has not been experimentally proven.

It localises to the periplasm. The enzyme catalyses 2 Fe(II)-[cytochrome] + nitrate + 2 H(+) = 2 Fe(III)-[cytochrome] + nitrite + H2O. Functionally, catalytic subunit of the periplasmic nitrate reductase complex NapAB. Receives electrons from NapB and catalyzes the reduction of nitrate to nitrite. This is Periplasmic nitrate reductase from Salmonella schwarzengrund (strain CVM19633).